The sequence spans 579 residues: Mitogen-activated protein kinase kinase kinase 7 (579 aa).

The interval 1–300 (MSTASAASSS…FPGADEPLQY (300 aa)) is interaction with MAPK8IP1. Residues 36–291 (IEVEEVVGRG…KIMTHLMRYF (256 aa)) form the Protein kinase domain. ATP-binding positions include 42–50 (VGRGAFGVV) and Lys-63. Lys-72 participates in a covalent cross-link: Glycyl lysine isopeptide (Lys-Gly) (interchain with G-Cter in ubiquitin). Asp-156 (proton acceptor) is an active-site residue. Lys-158 participates in a covalent cross-link: Glycyl lysine isopeptide (Lys-Gly) (interchain with G-Cter in ubiquitin). 2 positions are modified to phosphothreonine; by autocatalysis: Thr-184 and Thr-187. Ser-192 is subject to Phosphoserine; by autocatalysis. Residue Lys-209 forms a Glycyl lysine isopeptide (Lys-Gly) (interchain with G-Cter in ubiquitin) linkage. Disordered regions lie at residues 301–338 (PCQY…MEQV) and 354–391 (KNQA…MSAD). Over residues 306 to 338 (DEGQSNSATSTGSFMDIASTNTSNKSDTNMEQV) the composition is skewed to polar residues. The span at 361-375 (SESGRLSLGASRGSS) shows a compositional bias: low complexity. Residues Ser-367, Ser-389, and Ser-412 each carry the phosphoserine modification. The span at 416–425 (LTVTGTEPGQ) shows a compositional bias: polar residues. A disordered region spans residues 416–466 (LTVTGTEPGQVSSRSSSPSVRMITTSGPTSEKPARSHPWTPDDSTDTNGSD). The span at 426–436 (VSSRSSSPSVR) shows a compositional bias: low complexity. The residue at position 428 (Ser-428) is a Phosphoserine.

This sequence belongs to the protein kinase superfamily. STE Ser/Thr protein kinase family. MAP kinase kinase kinase subfamily. In terms of assembly, can form homodimer. Binds both upstream activators and downstream substrates in multimolecular complexes. Interacts with TAB1/MAP3K7IP1, TAB2/MAP3K7IP2 and TAB3/MAP3K7IP3. Identified in the TRIKA2 complex composed of MAP3K7/TAK1, TAB1/MAP3K7IP1 and TAB2/MAP3K7IP2. Interacts with PPM1L and PPM1B/PP2CB. Interaction with PP2A and PPP6C leads to its repressed activity. Interacts with TRAF6 and TAB1/MAP3K7IP1; during IL-1 signaling. Interacts with TAOK1 and TAOK2; interaction with TAOK2 interferes with MAP3K7 interaction with IKKA, thus preventing NF-kappa-B activation. Interacts with DYNC2I2 (via WD domains). Interacts with CYLD and RBCK1. Interacts with TGFBR1; induces MAP3K7/TAK1 activation by TRAF6. Interacts with MAPK8IP1 and SMAD6. Interacts with isoform 1 of VRK2. Interacts with DAB2; the interaction is induced by TGF-beta stimulation and may mediate TGF-beta stimulated JNK activation. Interacts with TRIM5. Part of a complex containing ITCH, NDFIP1 and MAP3K7. Interacts with PLEKHM1 (via N- and C-terminus). Interacts with TRIM8. Found in a complex with SH3RF1, RAC2, MAP2K7/MKK7, MAPK8IP1/JIP1, MAPK8/JNK1 and MAPK9/JNK2. Interacts with SASH1. Interacts with RIPK1. Requires Mg(2+) as cofactor. Post-translationally, association with TAB1/MAP3K7IP1 promotes autophosphorylation and subsequent activation. Association with TAB2/MAP3K7IP2, itself associated with free unanchored Lys-63 polyubiquitin chain, promotes autophosphorylation and subsequent activation of MAP3K7. Dephosphorylation at Thr-187 by PP2A and PPP6C leads to inactivation. 'Lys-48'-linked polyubiquitination at Lys-72 is induced by TNFalpha, and leads to proteasomal degradation. Undergoes 'Lys-48'-linked polyubiquitination catalyzed by ITCH. 'Lys-63'-linked polyubiquitination at Lys-158 by TRIM8 does not lead to proteasomal degradation but contributes to autophosphorylation and activation. Deubiquitinated by CYLD, a protease that selectively cleaves 'Lys-63'-linked ubiquitin chains.Deubiquitinated by USP19; leading to negative regulation of TNF-alpha- and IL-1beta-triggered NF-kappa-B activation.

It is found in the cytoplasm. Its subcellular location is the cell membrane. It carries out the reaction L-seryl-[protein] + ATP = O-phospho-L-seryl-[protein] + ADP + H(+). The enzyme catalyses L-threonyl-[protein] + ATP = O-phospho-L-threonyl-[protein] + ADP + H(+). Activated by pro-inflammatory cytokines and in response to physical and chemical stresses, including osmotic stress, oxidative stress, arsenic and ultraviolet light irradiation. Activated by 'Lys-63'-linked polyubiquitination and by autophosphorylation. Association with TAB1/MAP3K7IP1 and TAB2/MAP3K7IP2 promotes activation through autophosphorylation, whereas PPM1B/PP2CB, PP2A and PPP6C dephosphorylation leads to inactivation. Ceramides are also able to activate MAP3K7/TAK1. In terms of biological role, serine/threonine kinase which acts as an essential component of the MAP kinase signal transduction pathway. Plays an important role in the cascades of cellular responses evoked by changes in the environment. Mediates signal transduction of TRAF6, various cytokines including interleukin-1 (IL-1), transforming growth factor-beta (TGFB), TGFB-related factors like BMP2 and BMP4, toll-like receptors (TLR), tumor necrosis factor receptor CD40 and B-cell receptor (BCR). Once activated, acts as an upstream activator of the MKK/JNK signal transduction cascade and the p38 MAPK signal transduction cascade through the phosphorylation and activation of several MAP kinase kinases like MAP2K1/MEK1, MAP2K3/MKK3, MAP2K6/MKK6 and MAP2K7/MKK7. These MAP2Ks in turn activate p38 MAPKs and c-jun N-terminal kinases (JNKs); both p38 MAPK and JNK pathways control the transcription factors activator protein-1 (AP-1). Independently of MAP2Ks and p38 MAPKs, acts as a key activator of NF-kappa-B by promoting activation of the I-kappa-B-kinase (IKK) core complex. Mechanistically, recruited to polyubiquitin chains of RIPK2 and IKBKG/NEMO via TAB2/MAP3K7IP2 and TAB3/MAP3K7IP3, and catalyzes phosphorylation and activation of IKBKB/IKKB component of the IKK complex, leading to NF-kappa-B activation. In osmotic stress signaling, plays a major role in the activation of MAPK8/JNK1, but not that of NF-kappa-B. Promotes TRIM5 capsid-specific restriction activity. Phosphorylates RIPK1 at 'Ser-321' which positively regulates RIPK1 interaction with RIPK3 to promote necroptosis but negatively regulates RIPK1 kinase activity and its interaction with FADD to mediate apoptosis. Phosphorylates STING1 in response to cGAMP-activation, promoting association between STEEP1 and STING1 and STING1 translocation to COPII vesicles. The sequence is that of Mitogen-activated protein kinase kinase kinase 7 (Map3k7) from Mus musculus (Mouse).